The sequence spans 286 residues: Cytochrome bo(3) ubiquinol oxidase subunit 2 (286 aa).

An N-terminal signal peptide occupies residues 1–24 (MQFIKYKSYILKFLLVSCIFCING). A lipid anchor (N-palmitoyl cysteine) is attached at Cys-25. Residue Cys-25 is the site of S-diacylglycerol cysteine attachment. The Extracellular portion of the chain corresponds to 25–44 (CDCTILCPNGLIAQEQRFVL). The helical transmembrane segment at 45–67 (FVSFFTMLLIIIPVIFMTIFFVL) threads the bilayer. Topologically, residues 68 to 85 (RYRESNFSKTYDPKWSHS) are cytoplasmic. A helical transmembrane segment spans residues 86–108 (NIIELLIWGIPIIIIVFLSIFSW). Residues 109 to 286 (KSVHDLDPKK…VIANVLKISL (178 aa)) are Extracellular-facing.

It belongs to the cytochrome c oxidase subunit 2 family. In terms of assembly, heterooctamer of two A chains, two B chains, two C chains and two D chains.

The protein resides in the cell membrane. Its function is as follows. Cytochrome bo(3) ubiquinol terminal oxidase is the component of the aerobic respiratory chain of E.coli that predominates when cells are grown at high aeration. Has proton pump activity across the membrane in addition to electron transfer, pumping 2 protons/electron. This Buchnera aphidicola subsp. Baizongia pistaciae (strain Bp) protein is Cytochrome bo(3) ubiquinol oxidase subunit 2 (cyoA).